The sequence spans 293 residues: tRNA pseudouridine synthase A (293 aa).

Aspartate 60 acts as the Nucleophile in catalysis. Substrate is bound at residue tyrosine 118.

This sequence belongs to the tRNA pseudouridine synthase TruA family. As to quaternary structure, homodimer.

It catalyses the reaction uridine(38/39/40) in tRNA = pseudouridine(38/39/40) in tRNA. Its function is as follows. Formation of pseudouridine at positions 38, 39 and 40 in the anticodon stem and loop of transfer RNAs. The sequence is that of tRNA pseudouridine synthase A from Rippkaea orientalis (strain PCC 8801 / RF-1) (Cyanothece sp. (strain PCC 8801)).